Reading from the N-terminus, the 279-residue chain is Shikimate dehydrogenase (NADP(+)) (279 aa).

Shikimate is bound by residues serine 17–serine 19 and threonine 64. Residue lysine 68 is the Proton acceptor of the active site. 2 residues coordinate shikimate: asparagine 89 and aspartate 105. Residues glycine 130–alanine 134 and leucine 218 each bind NADP(+). Shikimate is bound at residue tyrosine 220. Residue glycine 242 coordinates NADP(+).

This sequence belongs to the shikimate dehydrogenase family. Homodimer.

It catalyses the reaction shikimate + NADP(+) = 3-dehydroshikimate + NADPH + H(+). It participates in metabolic intermediate biosynthesis; chorismate biosynthesis; chorismate from D-erythrose 4-phosphate and phosphoenolpyruvate: step 4/7. In terms of biological role, involved in the biosynthesis of the chorismate, which leads to the biosynthesis of aromatic amino acids. Catalyzes the reversible NADPH linked reduction of 3-dehydroshikimate (DHSA) to yield shikimate (SA). This chain is Shikimate dehydrogenase (NADP(+)), found in Methylococcus capsulatus (strain ATCC 33009 / NCIMB 11132 / Bath).